The chain runs to 442 residues: Syndecan-3 (442 aa).

Disordered stretches follow at residues 1-25 (MKPG…GPGA) and 55-85 (RPVD…SGYF). An N-terminal signal peptide occupies residues 1–44 (MKPGPPRRGTAQGQRVDTATHGPGARGLLLPPLLLLLLAGRAAG). The Extracellular segment spans residues 45–387 (AQRWRNENFE…SILERKEVLV (343 aa)). The span at 61-75 (GSGDDDSFPDDELDD) shows a compositional bias: acidic residues. 4 O-linked (Xyl...) (glycosaminoglycan) serine glycosylation sites follow: serine 78, serine 80, serine 82, and serine 89. Threonine 107 carries O-linked (GalNAc) threonine; by GALNT13 glycosylation. Disordered stretches follow at residues 151 to 175 (EEPS…TGAP), 180 to 199 (APAT…PATA), 225 to 244 (ATTP…DTEA), 252 to 327 (TATS…TTQP), and 339 to 372 (AAAK…SSAA). Residues 157-175 (ATTISTTTSTTAATTTGAP) are compositionally biased toward low complexity. A glycan (O-linked (GalNAc) serine; by GALNT13) is linked at serine 161. O-linked (GalNAc) threonine; by GALNT13 glycans are attached at residues threonine 162, threonine 163, threonine 170, and threonine 172. Residues 276 to 287 (TLPLGTTAPGPT) show a composition bias toward low complexity. The segment covering 289–303 (VAQTPTPESLLTTTQ) has biased composition (polar residues). Residues serine 315 and serine 367 are each glycosylated (O-linked (Xyl...) (glycosaminoglycan) serine). The chain crosses the membrane as a helical span at residues 388-408 (AVIVGGVVGALFAAFLVTLLI). Phosphotyrosine occurs at positions 409, 419, 431, and 441. The Cytoplasmic segment spans residues 409–442 (YRMKKKDEGSYTLEEPKQASVTYQKPDKQEEFYA). The tract at residues 419 to 442 (YTLEEPKQASVTYQKPDKQEEFYA) is disordered. Positions 433–442 (KPDKQEEFYA) are enriched in basic and acidic residues.

The protein belongs to the syndecan proteoglycan family. Interacts with TIAM1. Interacts (via heparan sulfate chains) with PTN; this interaction mediates the neurite outgrowth-promoting signal from PTN to the cytoskeleton of growing neurites; this interaction mediates osteoblast recruitment. Interacts with MDK; this interaction induces SDC3 clustering; this interaction induces neuronal cell adhesion and neurite outgrowth. In terms of processing, O-glycosylated within the Thr/Ser-rich region which could interact with lectin domains on other molecules. In terms of tissue distribution, high levels in neonatal brain, heart, and Schwann cells, barely detectable in neonatal or adult liver, or adult brain.

It localises to the cell membrane. Cell surface proteoglycan that may bear heparan sulfate. May have a role in the organization of cell shape by affecting the actin cytoskeleton, possibly by transferring signals from the cell surface in a sugar-dependent mechanism. In Rattus norvegicus (Rat), this protein is Syndecan-3 (Sdc3).